We begin with the raw amino-acid sequence, 159 residues long: Transcriptional repressor NrdR (159 aa).

Over residues 1–11 the composition is skewed to polar residues; that stretch reads MQCPSCQNTDS. The tract at residues 1-20 is disordered; sequence MQCPSCQNTDSRVLESRSAD. A zinc finger spans residues 3–34; it reads CPSCQNTDSRVLESRSADSGRSVRRRRECLNC. Positions 49–139 constitute an ATP-cone domain; the sequence is INVLKRSGAK…VYRQFNGIND (91 aa).

The protein belongs to the NrdR family. It depends on Zn(2+) as a cofactor.

Its function is as follows. Negatively regulates transcription of bacterial ribonucleotide reductase nrd genes and operons by binding to NrdR-boxes. This Prochlorococcus marinus (strain NATL1A) protein is Transcriptional repressor NrdR.